A 144-amino-acid chain; its full sequence is MESSLGSDLARLVRIWRALIDYRLKPLKLTQTHWITLHNIYQLPPDQSQIQLAKAIGIEQPSLVRTLDQLESKGLIVRNICSNDRRAKRITLTELAKPVINQVNQVINVTRNEVFYGLRVEEIQQLNNIIAKLERNIINLYNKT.

One can recognise an HTH marR-type domain in the interval 2 to 135 (ESSLGSDLAR…LNNIIAKLER (134 aa)). The segment at residues 49–72 (QIQLAKAIGIEQPSLVRTLDQLES) is a DNA-binding region (H-T-H motif).

It belongs to the SlyA family. Homodimer.

Its function is as follows. Transcription regulator that can specifically activate or repress expression of target genes. The chain is Transcriptional regulator SlyA from Blochmanniella floridana.